The sequence spans 168 residues: Crossover junction endodeoxyribonuclease RuvC (168 aa).

Catalysis depends on residues Asp9, Glu70, and Asp145. The Mg(2+) site is built by Asp9, Glu70, and Asp145.

Belongs to the RuvC family. Homodimer which binds Holliday junction (HJ) DNA. The HJ becomes 2-fold symmetrical on binding to RuvC with unstacked arms; it has a different conformation from HJ DNA in complex with RuvA. In the full resolvosome a probable DNA-RuvA(4)-RuvB(12)-RuvC(2) complex forms which resolves the HJ. Mg(2+) is required as a cofactor.

It is found in the cytoplasm. The enzyme catalyses Endonucleolytic cleavage at a junction such as a reciprocal single-stranded crossover between two homologous DNA duplexes (Holliday junction).. Functionally, the RuvA-RuvB-RuvC complex processes Holliday junction (HJ) DNA during genetic recombination and DNA repair. Endonuclease that resolves HJ intermediates. Cleaves cruciform DNA by making single-stranded nicks across the HJ at symmetrical positions within the homologous arms, yielding a 5'-phosphate and a 3'-hydroxyl group; requires a central core of homology in the junction. The consensus cleavage sequence is 5'-(A/T)TT(C/G)-3'. Cleavage occurs on the 3'-side of the TT dinucleotide at the point of strand exchange. HJ branch migration catalyzed by RuvA-RuvB allows RuvC to scan DNA until it finds its consensus sequence, where it cleaves and resolves the cruciform DNA. The chain is Crossover junction endodeoxyribonuclease RuvC from Chlamydia caviae (strain ATCC VR-813 / DSM 19441 / 03DC25 / GPIC) (Chlamydophila caviae).